The following is a 1453-amino-acid chain: NRPS-like tryptophan epimerase fscC (1453 aa).

The segment at 37-433 (SYGELSAMSS…ATHLIRNCVV (397 aa)) is adenylation. Residues 544–626 (TGSRQSTRHK…LFHTSKSRFT (83 aa)) enclose the Carrier domain. O-(pantetheine 4'-phosphoryl)serine is present on Ser-586. The epimerization (E) domain stretch occupies residues 639–1053 (FPLSPVQRFF…KDVLESAGVF (415 aa)). The interval 1181-1391 (FFGLQSNERA…AGSSLHQHNQ (211 aa)) is condensation.

It belongs to the NRP synthetase family. It depends on pantetheine 4'-phosphate as a cofactor.

Its pathway is secondary metabolite biosynthesis. In terms of biological role, NRPS-like tryptophan epimerase; part of the fragmented gene cluster that mediates the biosynthesis of fusarochromene, a tryptophan-derived metabolite closely related to a group of mycotoxins including fusarochromanone. Within the pathway, fscC catalyzes the first step via epimerization of L-tryptophan to provide the intermediate D-tryptophan. D-tryptophan is subsequently hydroxylated by the tryptophan 6-hydroxylase fscE to yield 6-hydroxytryptophan. The pyrrole ring undergoes cleavaged by the tryptophan 2,3-dioxygenase fscD and is finally converted to 4-hydroxykyrunenine by the hydrolase fscH. The NRPS-like oxidoreductase fscA reduces the carboxyl group to primary alcohol and the DMATS-type prenyltransferase fscG performs prenylation, followed by the formation of a chromene ring catalyzed by the oxidoreductase fscI, which leads to desacetylfusarochromene. Epoxidation by fscF and rearrangement reactions of chromene double bonds convert compound desacetylfusarochromene to fusarochromanones. Although specific acetyltransferases were not found near the fsc gene cluster, several predicted enzymes containing the N-acetyltransferase superfamily domain are present in the genome of F.equiseti. These predicted enzymes may have the potential to convert desacetylfusarochromene to fusarochromene. The protein is NRPS-like tryptophan epimerase fscC of Fusarium equiseti (Fusarium scirpi).